We begin with the raw amino-acid sequence, 117 residues long: Large ribosomal subunit protein eL22 (117 aa).

Residues S49 and S50 each carry the phosphoserine modification.

This sequence belongs to the eukaryotic ribosomal protein eL22 family. Component of the large ribosomal subunit (LSU). Mature yeast ribosomes consist of a small (40S) and a large (60S) subunit. The 40S small subunit contains 1 molecule of ribosomal RNA (18S rRNA) and at least 33 different proteins. The large 60S subunit contains 3 rRNA molecules (25S, 5.8S and 5S rRNA) and at least 46 different proteins.

It localises to the cytoplasm. The protein localises to the nucleus. Its subcellular location is the nucleolus. In terms of biological role, component of the ribosome, a large ribonucleoprotein complex responsible for the synthesis of proteins in the cell. The small ribosomal subunit (SSU) binds messenger RNAs (mRNAs) and translates the encoded message by selecting cognate aminoacyl-transfer RNA (tRNA) molecules. The large subunit (LSU) contains the ribosomal catalytic site termed the peptidyl transferase center (PTC), which catalyzes the formation of peptide bonds, thereby polymerizing the amino acids delivered by tRNAs into a polypeptide chain. The nascent polypeptides leave the ribosome through a tunnel in the LSU and interact with protein factors that function in enzymatic processing, targeting, and the membrane insertion of nascent chains at the exit of the ribosomal tunnel. This is Large ribosomal subunit protein eL22 (rpl22) from Schizosaccharomyces pombe (strain 972 / ATCC 24843) (Fission yeast).